A 125-amino-acid chain; its full sequence is MGVMWGLISVAIASLAQLSLGFAMMRLPSIAHPLAFISGLGALNAATLALFAGLAGYLVSVFCWHKTLHTLALSKAYALLSLSYVLVWVASMLLPGLQGAFSLKAMLGVLCIMAGVMLIFLPARS.

Residues 1 to 2 (MG) are Cytoplasmic-facing. The helical transmembrane segment at 3-23 (VMWGLISVAIASLAQLSLGFA) threads the bilayer. Over 24-33 (MMRLPSIAHP) the chain is Periplasmic. The chain crosses the membrane as a helical span at residues 34–54 (LAFISGLGALNAATLALFAGL). Residues 55-76 (AGYLVSVFCWHKTLHTLALSKA) lie on the Cytoplasmic side of the membrane. Residues 77-97 (YALLSLSYVLVWVASMLLPGL) form a helical membrane-spanning segment. Topologically, residues 98 to 100 (QGA) are periplasmic. The helical transmembrane segment at 101–121 (FSLKAMLGVLCIMAGVMLIFL) threads the bilayer. The Cytoplasmic segment spans residues 122 to 125 (PARS).

The protein belongs to the ArnF family. In terms of assembly, heterodimer of ArnE and ArnF.

It is found in the cell inner membrane. It participates in bacterial outer membrane biogenesis; lipopolysaccharide biosynthesis. Its function is as follows. Translocates 4-amino-4-deoxy-L-arabinose-phosphoundecaprenol (alpha-L-Ara4N-phosphoundecaprenol) from the cytoplasmic to the periplasmic side of the inner membrane. The protein is Probable 4-amino-4-deoxy-L-arabinose-phosphoundecaprenol flippase subunit ArnF of Salmonella agona (strain SL483).